Consider the following 266-residue polypeptide: Protein crossbronx-like (266 aa).

Residues 15–178 form the UBC core domain; it reads KQGYHILAEY…VQEQAILSRN (164 aa). The segment at 226 to 266 is disordered; the sequence is SEYLGHIDSSRQMDEEETNQLEKLHRGRIPEPQREEAEVSL. Residues 245-266 show a composition bias toward basic and acidic residues; that stretch reads QLEKLHRGRIPEPQREEAEVSL.

This sequence belongs to the ubiquitin-conjugating enzyme family. FTS subfamily.

The chain is Protein crossbronx-like from Drosophila sechellia (Fruit fly).